A 114-amino-acid polypeptide reads, in one-letter code: Iron-sulfur cluster insertion protein ErpA (114 aa).

Iron-sulfur cluster is bound by residues cysteine 42, cysteine 106, and cysteine 108.

This sequence belongs to the HesB/IscA family. Homodimer. It depends on iron-sulfur cluster as a cofactor.

In terms of biological role, required for insertion of 4Fe-4S clusters for at least IspG. The sequence is that of Iron-sulfur cluster insertion protein ErpA from Proteus mirabilis (strain HI4320).